The chain runs to 106 residues: UPF0060 membrane protein Mrad2831_0929 (106 aa).

Transmembrane regions (helical) follow at residues 3–23 (LLAY…FWAW), 30–50 (AWWT…LTLV), 59–79 (FAAY…LAEG), and 87–104 (LAGS…LLGR).

It belongs to the UPF0060 family.

The protein localises to the cell inner membrane. The sequence is that of UPF0060 membrane protein Mrad2831_0929 from Methylobacterium radiotolerans (strain ATCC 27329 / DSM 1819 / JCM 2831 / NBRC 15690 / NCIMB 10815 / 0-1).